The chain runs to 128 residues: UPF0292 protein MJ1624 (128 aa).

The region spanning 23 to 105 (EKPIIVEGKR…KVNTKIRHEI (83 aa)) is the Toprim domain. Mg(2+) is bound by residues Glu29, Asp74, and Asp76.

The protein belongs to the UPF0292 family. It depends on Mg(2+) as a cofactor.

The chain is UPF0292 protein MJ1624 from Methanocaldococcus jannaschii (strain ATCC 43067 / DSM 2661 / JAL-1 / JCM 10045 / NBRC 100440) (Methanococcus jannaschii).